A 249-amino-acid chain; its full sequence is Triosephosphate isomerase (249 aa).

Residue 9–11 (NWK) participates in substrate binding. The Electrophile role is filled by histidine 95. Residue glutamate 167 is the Proton acceptor of the active site. Substrate contacts are provided by residues glycine 173, serine 213, and 234-235 (GG).

This sequence belongs to the triosephosphate isomerase family. Homodimer.

The protein localises to the cytoplasm. The catalysed reaction is D-glyceraldehyde 3-phosphate = dihydroxyacetone phosphate. Its pathway is carbohydrate biosynthesis; gluconeogenesis. It functions in the pathway carbohydrate degradation; glycolysis; D-glyceraldehyde 3-phosphate from glycerone phosphate: step 1/1. Its function is as follows. Involved in the gluconeogenesis. Catalyzes stereospecifically the conversion of dihydroxyacetone phosphate (DHAP) to D-glyceraldehyde-3-phosphate (G3P). In Dictyoglomus turgidum (strain DSM 6724 / Z-1310), this protein is Triosephosphate isomerase.